The sequence spans 174 residues: Small ribosomal subunit protein uS4 (174 aa).

In terms of domain architecture, S4 RNA-binding spans 105-169 (RRLQTVAYRK…SPLADDLHPE (65 aa)).

Belongs to the universal ribosomal protein uS4 family. As to quaternary structure, part of the 30S ribosomal subunit. Contacts protein S5. The interaction surface between S4 and S5 is involved in control of translational fidelity.

Its function is as follows. One of the primary rRNA binding proteins, it binds directly to 16S rRNA where it nucleates assembly of the body of the 30S subunit. Functionally, with S5 and S12 plays an important role in translational accuracy. This Natronomonas pharaonis (strain ATCC 35678 / DSM 2160 / CIP 103997 / JCM 8858 / NBRC 14720 / NCIMB 2260 / Gabara) (Halobacterium pharaonis) protein is Small ribosomal subunit protein uS4.